A 544-amino-acid polypeptide reads, in one-letter code: Probable protein kinase UbiB (544 aa).

The Protein kinase domain maps to 123–501; the sequence is DFDIEPLASA…KRQQATGKFL (379 aa). ATP contacts are provided by residues 129 to 137 and Lys-152; that span reads LASASIAQV. Asp-287 (proton acceptor) is an active-site residue. Residues 500-520 form a helical membrane-spanning segment; the sequence is FLFGVGATLVVCSAILVSSPY.

The protein belongs to the ABC1 family. UbiB subfamily.

Its subcellular location is the cell inner membrane. The protein operates within cofactor biosynthesis; ubiquinone biosynthesis [regulation]. In terms of biological role, is probably a protein kinase regulator of UbiI activity which is involved in aerobic coenzyme Q (ubiquinone) biosynthesis. The chain is Probable protein kinase UbiB from Vibrio atlanticus (strain LGP32) (Vibrio splendidus (strain Mel32)).